A 366-amino-acid polypeptide reads, in one-letter code: Alanine racemase (366 aa).

The active-site Proton acceptor; specific for D-alanine is lysine 40. The residue at position 40 (lysine 40) is an N6-(pyridoxal phosphate)lysine. Arginine 136 provides a ligand contact to substrate. The Proton acceptor; specific for L-alanine role is filled by tyrosine 263. Methionine 310 contacts substrate.

The protein belongs to the alanine racemase family. Pyridoxal 5'-phosphate serves as cofactor.

The enzyme catalyses L-alanine = D-alanine. It participates in amino-acid biosynthesis; D-alanine biosynthesis; D-alanine from L-alanine: step 1/1. Its function is as follows. Catalyzes the interconversion of L-alanine and D-alanine. May also act on other amino acids. The protein is Alanine racemase (alr) of Streptococcus equi subsp. equi (strain 4047).